We begin with the raw amino-acid sequence, 253 residues long: Triosephosphate isomerase (253 aa).

Residue N9–K11 participates in substrate binding. H95 functions as the Electrophile in the catalytic mechanism. E167 functions as the Proton acceptor in the catalytic mechanism. Residues G173, S213, and G234–G235 each bind substrate. S213 is modified (phosphoserine).

The protein belongs to the triosephosphate isomerase family. As to quaternary structure, homodimer.

It localises to the cytoplasm. The catalysed reaction is D-glyceraldehyde 3-phosphate = dihydroxyacetone phosphate. Its pathway is carbohydrate biosynthesis; gluconeogenesis. The protein operates within carbohydrate degradation; glycolysis; D-glyceraldehyde 3-phosphate from glycerone phosphate: step 1/1. Its function is as follows. Involved in the gluconeogenesis. Catalyzes stereospecifically the conversion of dihydroxyacetone phosphate (DHAP) to D-glyceraldehyde-3-phosphate (G3P). This is Triosephosphate isomerase from Bacillus subtilis (strain 168).